A 111-amino-acid polypeptide reads, in one-letter code: Notch-regulated ankyrin repeat-containing protein B (111 aa).

ANK repeat units follow at residues 47 to 76 (EGQT…DTRL) and 80 to 109 (DGWS…YSSS).

Belongs to the NRARP family.

Functionally, regulates independently canonical Wnt and Notch signaling by modulating LEF1 and Notch protein turnover. Stabilizes LEF1, a pivotal transcription factor in the Wnt signaling cascade, by blocking its ubiquitination. Involved in angiogenesis; involved in intersegmental vessel patterning during development. The sequence is that of Notch-regulated ankyrin repeat-containing protein B (nrarpb) from Danio rerio (Zebrafish).